Here is a 543-residue protein sequence, read N- to C-terminus: Aspartate/alanine antiporter (543 aa).

10 helical membrane passes run 4 to 26, 33 to 55, 88 to 110, 117 to 139, 159 to 178, 362 to 381, 385 to 407, 428 to 450, 455 to 477, and 520 to 542; these read IGNF…GYLL, SFTL…LGVF, FGAK…AYAC, GPGI…GSSL, IPIV…LIFL, IINY…LGIV, VSGV…VQSI, SIGL…ISAI, ISVL…VICY, and VAPA…IVLL.

It belongs to the AAE transporter (TC 2.A.81) family.

It localises to the cell membrane. In terms of biological role, catalyzes the electrogenic exchange of aspartate with alanine. The polypeptide is Aspartate/alanine antiporter (aspT) (Tetragenococcus halophilus (Pediococcus halophilus)).